Consider the following 292-residue polypeptide: Elongation factor Ts (292 aa).

The tract at residues 79-82 is involved in Mg(2+) ion dislocation from EF-Tu; it reads TDFV.

The protein belongs to the EF-Ts family.

The protein localises to the cytoplasm. Functionally, associates with the EF-Tu.GDP complex and induces the exchange of GDP to GTP. It remains bound to the aminoacyl-tRNA.EF-Tu.GTP complex up to the GTP hydrolysis stage on the ribosome. This Mycoplasmoides gallisepticum (strain R(low / passage 15 / clone 2)) (Mycoplasma gallisepticum) protein is Elongation factor Ts.